The sequence spans 137 residues: Ribosome-binding factor A (137 aa).

Belongs to the RbfA family. Monomer. Binds 30S ribosomal subunits, but not 50S ribosomal subunits or 70S ribosomes.

The protein resides in the cytoplasm. Its function is as follows. One of several proteins that assist in the late maturation steps of the functional core of the 30S ribosomal subunit. Associates with free 30S ribosomal subunits (but not with 30S subunits that are part of 70S ribosomes or polysomes). Required for efficient processing of 16S rRNA. May interact with the 5'-terminal helix region of 16S rRNA. This chain is Ribosome-binding factor A, found in Shewanella amazonensis (strain ATCC BAA-1098 / SB2B).